The chain runs to 1226 residues: DNA-directed RNA polymerase subunit beta'' (1226 aa).

C223, C297, C304, and C307 together coordinate Zn(2+).

It belongs to the RNA polymerase beta' chain family. RpoC2 subfamily. In plastids the minimal PEP RNA polymerase catalytic core is composed of four subunits: alpha, beta, beta', and beta''. When a (nuclear-encoded) sigma factor is associated with the core the holoenzyme is formed, which can initiate transcription. Requires Zn(2+) as cofactor.

Its subcellular location is the plastid. It is found in the chloroplast. The enzyme catalyses RNA(n) + a ribonucleoside 5'-triphosphate = RNA(n+1) + diphosphate. DNA-dependent RNA polymerase catalyzes the transcription of DNA into RNA using the four ribonucleoside triphosphates as substrates. The sequence is that of DNA-directed RNA polymerase subunit beta'' from Pyropia yezoensis (Susabi-nori).